A 504-amino-acid chain; its full sequence is Multidrug efflux pump LfrA (504 aa).

A run of 14 helical transmembrane segments spans residues 19-39 (WVAL…NTVL), 58-78 (LWIV…MGSL), 87-107 (LLLI…FAPS), 110-130 (LLVG…PSTL), 145-165 (LAIA…PIVG), 172-192 (FHWG…LVLG), 206-226 (PFDP…VWAV), 233-253 (GLSA…ALFV), 275-295 (TSSI…IFFI), 309-329 (TAGL…LAVV), 338-358 (DTLM…ILLF), 361-381 (NLTV…VGVS), 408-428 (AYEL…TAFY), and 480-500 (IAPT…VVGV).

Belongs to the major facilitator superfamily.

It localises to the cell inner membrane. Its activity is regulated as follows. Inhibited by the protonophore carbonyl cyanide m-chorophenylhydrazone (CCCP). Ethidium bromide efflux is inhibited by chlorpromazine, thioridazine and verapamil. Energy-dependent efflux pump that contributes to drug resistance. Catalyzes the efflux of norfloxacin and several related fluoroquinolones (FQ). Contributes significantly to the intrinsic MICs for ethidium bromide and acriflavine. Overexpression confers low-level resistance to hydrophilic FQ such as ciprofloxacin, ofloxacin and levofloxacin, and to ethidium bromide, acridine, acriflavine, rhodamine 123 and some quaternary ammonium compounds. May contribute to resistance to certain beta-lactams. Probably uses the proton motive force to export drugs. The protein is Multidrug efflux pump LfrA of Mycolicibacterium smegmatis (strain ATCC 700084 / mc(2)155) (Mycobacterium smegmatis).